Here is a 298-residue protein sequence, read N- to C-terminus: Ornithine carbamoyltransferase (298 aa).

Residues 50-53 (STRT), Q77, R101, and 128-131 (HPCQ) contribute to the carbamoyl phosphate site. Residues N159, D216, and 220–221 (SM) contribute to the L-ornithine site. Carbamoyl phosphate contacts are provided by residues 256-257 (CL) and R284.

It belongs to the aspartate/ornithine carbamoyltransferase superfamily. OTCase family.

The protein resides in the cytoplasm. The catalysed reaction is carbamoyl phosphate + L-ornithine = L-citrulline + phosphate + H(+). The protein operates within amino-acid biosynthesis; L-arginine biosynthesis; L-arginine from L-ornithine and carbamoyl phosphate: step 1/3. Functionally, reversibly catalyzes the transfer of the carbamoyl group from carbamoyl phosphate (CP) to the N(epsilon) atom of ornithine (ORN) to produce L-citrulline. The polypeptide is Ornithine carbamoyltransferase (Methylococcus capsulatus (strain ATCC 33009 / NCIMB 11132 / Bath)).